The chain runs to 242 residues: Uridylate kinase (242 aa).

11 to 14 provides a ligand contact to ATP; that stretch reads KLSG. The interval 19–24 is involved in allosteric activation by GTP; the sequence is GEKGAG. UMP is bound at residue Gly-53. ATP-binding residues include Gly-54 and Arg-58. UMP contacts are provided by residues Asp-73 and 134–141; that span reads IGSPYFST. The ATP site is built by Asn-162, Tyr-168, and Asp-171.

Belongs to the UMP kinase family. In terms of assembly, homohexamer.

The protein resides in the cytoplasm. It carries out the reaction UMP + ATP = UDP + ADP. Its pathway is pyrimidine metabolism; CTP biosynthesis via de novo pathway; UDP from UMP (UMPK route): step 1/1. With respect to regulation, allosterically activated by GTP. Inhibited by UTP. In terms of biological role, catalyzes the reversible phosphorylation of UMP to UDP. This is Uridylate kinase from Streptococcus pyogenes serotype M2 (strain MGAS10270).